The chain runs to 660 residues: Pescadillo homolog (660 aa).

Disordered stretches follow at residues 313-358 (VESD…SYSS) and 471-660 (PELY…EKKA). Positions 331–342 (EEKPSDAIDKFE) are enriched in basic and acidic residues. The BRCT domain occupies 360–476 (DPAQLFSRLT…ELKSPELYGP (117 aa)). The stretch at 501–659 (LEEQQSEGEA…KRRRLEKEKK (159 aa)) forms a coiled coil. Acidic residues predominate over residues 504–566 (QQSEGEAIDA…EEGSEDEEES (63 aa)). Basic and acidic residues predominate over residues 584 to 619 (VKGDKKMDAKTKAKLEAKKALERKKKSEAEDLERAK).

Belongs to the pescadillo family. Component of the NOP7 complex, composed of ERB1, NOP7 and YTM1. The complex is held together by ERB1, which interacts with NOP7 via its N-terminal domain and with YTM1 via a high-affinity interaction between the seven-bladed beta-propeller domains of the 2 proteins. The NOP7 complex associates with the 66S pre-ribosome.

It localises to the nucleus. Its subcellular location is the nucleolus. The protein localises to the nucleoplasm. In terms of biological role, component of the NOP7 complex, which is required for maturation of the 25S and 5.8S ribosomal RNAs and formation of the 60S ribosome. This is Pescadillo homolog from Chaetomium globosum (strain ATCC 6205 / CBS 148.51 / DSM 1962 / NBRC 6347 / NRRL 1970) (Soil fungus).